The sequence spans 88 residues: MNKKISLHSSSGPVKKTGSVEFQIYHLTNQVIKLTSHLKQHSKDYSSQRGLWKMLGKRKRLLVYLSKNDINCYENLINKLGIRGLKIR.

Belongs to the universal ribosomal protein uS15 family. As to quaternary structure, part of the 30S ribosomal subunit.

The protein resides in the plastid. It localises to the chloroplast. The polypeptide is Small ribosomal subunit protein uS15c (rps15) (Angiopteris evecta (Mule's foot fern)).